Consider the following 620-residue polypeptide: Acetylcholinesterase 1 (620 aa).

Positions 1-31 are cleaved as a signal peptide; sequence MRNSLLFFIFLPSTILAVDLIHLHDGSPLFG. Asn74 is a glycosylation site (N-linked (GlcNAc...) asparagine). A disulfide bridge links Cys82 with Cys109. Ser216 functions as the Acyl-ester intermediate in the catalytic mechanism. A disulfide bridge links Cys270 with Cys286. Asn272 carries an N-linked (GlcNAc...) asparagine glycan. Active-site charge relay system residues include Glu346 and His468. An intrachain disulfide couples Cys430 to Cys558. N-linked (GlcNAc...) asparagine glycans are attached at residues Asn486 and Asn536.

The protein belongs to the type-B carboxylesterase/lipase family. Oligomer composed of disulfide-linked homodimers.

It localises to the synapse. The protein localises to the secreted. Its subcellular location is the cell membrane. It catalyses the reaction acetylcholine + H2O = choline + acetate + H(+). Rapidly hydrolyzes acetylcholine and releases choline into the synapse. It can hydrolyze propionylcholine and butyrylthiocholine in vitro. This is Acetylcholinesterase 1 (ace-1) from Caenorhabditis elegans.